The chain runs to 511 residues: Vicilin-like seed storage protein At2g28490 (511 aa).

Residues 1-27 form the signal peptide; sequence MEKNKRAIGFLLLVVLINGVMMTRSNG. The interval 54–81 is disordered; it reads GGGGGGAWGGEGEGGGEWGGGGEGGGGG. 2 consecutive Cupin type-1 domains span residues 86–238 and 329–480; these read FMMR…PELQ and YNIY…ETMR. N-linked (GlcNAc...) asparagine glycans are attached at residues N231, N369, N403, and N464.

The protein belongs to the 7S seed storage protein family.

Functionally, seed storage protein. This Arabidopsis thaliana (Mouse-ear cress) protein is Vicilin-like seed storage protein At2g28490.